Reading from the N-terminus, the 295-residue chain is Nuclear transcription factor Y subunit A-2 (295 aa).

A Subunit association domain (SAD) motif is present at residues 139–165 (YVNSKQYHGIIRRRQSRAKAAAVLDQK). Residues 173-198 (KPYMHHSRHLHALRRPRGSGGRFLNT) constitute a DNA-binding region (NFYA/HAP2-type). A compositionally biased stretch (basic residues) spans 178–189 (HSRHLHALRRPR). Residues 178 to 244 (HSRHLHALRR…VVHPENGTMN (67 aa)) are disordered. The segment covering 197-209 (NTKSQNLENSGTN) has biased composition (polar residues). A compositionally biased stretch (low complexity) spans 216 to 233 (SMQIQSQPKPQQSNSQNS).

This sequence belongs to the NFYA/HAP2 subunit family. In terms of assembly, heterotrimeric transcription factor composed of three components, NF-YA, NF-YB and NF-YC. NF-YB and NF-YC must interact and dimerize for NF-YA association and DNA binding. Component of a heat stress-inducible transcriptional complex with NF-YA and NF-YB subunits made, at least, of NFYA2, NFYB3 and DPB3-1 in cooperation with DREB2A. Ubiquitous. Expressed in seedlings, roots, petioles, hypocotyls, reproductive organ tissues and leaves.

Its subcellular location is the nucleus. Its function is as follows. Stimulates the transcription of various genes by recognizing and binding to a CCAAT motif in promoters. Promotes the expression of heat stress-inducible genes by contributing to the formation of a heat stress-specific transcriptional complex with NF-Y subunits (e.g. DPB3-1, NF-YA2 and NF-YB3) and DREB2A at the promoter of target genes, thus promoting heat tolerance. In Arabidopsis thaliana (Mouse-ear cress), this protein is Nuclear transcription factor Y subunit A-2.